A 599-amino-acid polypeptide reads, in one-letter code: MLSYLKKNLRSYFSSRVLIFTLAIAAIIFACATFYVISLESKNFSTIIGFLLVDLAIFLILGVLLTQKFFTQNSNNDSSKLQNRIVIAFSLVAAIPTIIVSVFSVYFFNLSVQAWFDKKISTVLDQSVIVAESYIAEHKLQLKETALAVAEDLSDMYYDLIHNPALFTKTLNTEAEMRSLDEAIVLNKSTNTIVANSYLSFSLSFATIPAHLIKKADLGEPVEVKSDPTKIRMLIKLKEYNDVYLLVGRLVDNKIIDHIDATNGAAAEYNSLKNEIDNIQIKFSIMFIFIALLLLFVAISFGVIFTAKIVKPIKKLVTATDKVKDGDLTVQVPENEVDKDEIGTLYAAFNRMIKQLSRQQRDLVIAQRAMAWSDVAKKVAHEIKNPLTPILLASERLLKKFSPEIKEKEEFENYLKMIIRHTNDIKNIVSEFVLFARLPAPKFTKSELVYLVKHIVEARKLLNDNILYKFESNVDQFDFMCDATQINQVMINLLKNAEESIEGRESGKIEVTIDAKDDFISVIVIDSGKGFPPELIGKATESYVTTSSKGMGVGLAIVKRIVEEHCGILDIANREEEGAIIDIKFDLKKLDLKVGRSGG.

4 helical membrane-spanning segments follow: residues 17–37, 44–64, 85–105, and 285–305; these read VLIF…FYVI, FSTI…LGVL, IVIA…VFSV, and IMFI…GVIF. The 55-residue stretch at 307 to 361 folds into the HAMP domain; that stretch reads AKIVKPIKKLVTATDKVKDGDLTVQVPENEVDKDEIGTLYAAFNRMIKQLSRQQR. In terms of domain architecture, Histidine kinase spans 378 to 589; that stretch reads KVAHEIKNPL…IIDIKFDLKK (212 aa). His-381 carries the post-translational modification Phosphohistidine; by autocatalysis.

Its subcellular location is the cell membrane. The catalysed reaction is ATP + protein L-histidine = ADP + protein N-phospho-L-histidine.. Member of the two-component regulatory system RF_0427/RF_0895. The polypeptide is Putative sensor histidine kinase NtrY-like (Rickettsia felis (strain ATCC VR-1525 / URRWXCal2) (Rickettsia azadi)).